Reading from the N-terminus, the 654-residue chain is MFDTVLVANRGEIAVRVIRTLRRLGIRSVAVYSDPDVDARHVLEADAAVRLGPAPARESYLDIGKVLDAAARTGAQAIHPGYGFLAENADFAAACERARVVFLGPPARAIEVMGDKIAAKNAVAAFDVPVVPGVARAGLTDDALVTAAAEVGYPVLIKPSAGGGGKGMRLVQDPARLPEALVSARREAMSSFGDDTLFLERFVLRPRHIEVQVLADAHGNVVHLGERECSLQRRHQKVIEEAPSPLLDPQTRERIGVAACNTARCVDYVGAGTVEFIVSAQRPDEFFFMEMNTRLQVEHPVTEAITGLDLVEWQLRVGAGEKLGFAQNDIELRGHAIEARVYAEDPAREFLPTGGRVLAVFEPAGPGVRVDSSLLGGTVVGSDYDPLLTKVIAHGADREEALDRLDQALARTAVLGVQTNVEFLRFLLADERVRVGDLDTAVLDERSADFTARPAPDDVLAAGGLYRQWALARRAQGDLWAAPSGWRGGGHMAPVRTAMRTPLRSETVSVWGPPESAQVQVGDGEIDCASVQVTREQMSVTISGLRRDYRWAEADRHLWIADERGTWHLREAEEHKIHRAVGARPAEVVSPMPGSVIAVQVESGSQISAGDVVVVVEAMKMEHSLEAPVSGRVQVLVSVGDQVKVEQVLARIKD.

Residues 1-448 enclose the Biotin carboxylation domain; that stretch reads MFDTVLVANR…DTAVLDERSA (448 aa). The 200-residue stretch at 120–319 folds into the ATP-grasp domain; sequence KNAVAAFDVP…LVEWQLRVGA (200 aa). 148 to 209 serves as a coordination point for ATP; that stretch reads AAEVGYPVLI…ERFVLRPRHI (62 aa). Residues glutamate 275, glutamate 290, and asparagine 292 each coordinate Mg(2+). Residues glutamate 275, glutamate 290, and asparagine 292 each contribute to the Mn(2+) site. In terms of domain architecture, Biotinyl-binding spans 578 to 653; sequence HRAVGARPAE…KVEQVLARIK (76 aa). Lysine 620 carries the N6-biotinyllysine modification.

As to quaternary structure, the biotin-dependent acyl-CoA carboxylase complex is composed of AccA1, which contains the biotin carboxylase (BC) and biotin carboxyl carrier protein (BCCP) domains, and AccD1, which contains the carboxyl transferase (CT) domain. The AccA1/AccD1 complex forms a dodecamer. Mg(2+) serves as cofactor. The cofactor is Mn(2+). It depends on biotin as a cofactor.

The catalysed reaction is N(6)-biotinyl-L-lysyl-[protein] + hydrogencarbonate + ATP = N(6)-carboxybiotinyl-L-lysyl-[protein] + ADP + phosphate + H(+). Its pathway is amino-acid degradation; L-leucine degradation. Component of a biotin-dependent acyl-CoA carboxylase complex. This subunit catalyzes the ATP-dependent carboxylation of the biotin carried by the biotin carboxyl carrier (BCC) domain, resulting in the formation of carboxyl biotin. When associated with the beta1 subunit AccD1, is involved in branched amino-acid catabolism with methylcrotonyl coenzyme A as the substrate. The protein is Biotin-dependent 3-methylcrotonyl-coenzyme A carboxylase alpha1 subunit (accA1) of Mycobacterium bovis (strain ATCC BAA-935 / AF2122/97).